The following is a 146-amino-acid chain: Transcription antitermination protein NusB (146 aa).

This sequence belongs to the NusB family.

Involved in transcription antitermination. Required for transcription of ribosomal RNA (rRNA) genes. Binds specifically to the boxA antiterminator sequence of the ribosomal RNA (rrn) operons. The protein is Transcription antitermination protein NusB of Koribacter versatilis (strain Ellin345).